Here is a 1639-residue protein sequence, read N- to C-terminus: MKIIFFLCSFLFFIINTQCVTHESYQELVKKLEALEDAVLTGYSLFQKEKMVLNEGTSGTAVTTSTPGSKGSVASGGSGGSVASGGSVASGGSVASGGSVASGGSGNSRRTNPSDNSSDSDAKSYADLKHRVRNYLLTIKELKYPQLFDLTNHMLTLCDNIHGFKYLIDGYEEINELLYKLNFYFDLLRAKLNDVCANDYCQIPFNLKIRANELDVLKKLVFGYRKPLDNIKDNVGKMEDYIKKNKKTIENINELIEESKKTIDKNKNATKEEEKKKLYQAQYDLSIYNKQLEEAHNLISVLEKRIDTLKKNENIKELLDKINEIKNPPPANSGNTPNTLLDKNKKIEEHEKEIKEIAKTIKFNIDSLFTDPLELEYYLREKNKNIDISAKVETKESTEPNEYPNGVTYPLSYNDINNALNELNSFGDLINPFDYTKEPSKNIYTDNERKKFINEIKEKIKIEKKKIESDKKSYEDRSKSLNDITKEYEKLLNEIYDSKFNNNIDLTNFEKMMGKRYSYKVEKLTHHNTFASYENSKHNLEKLTKALKYMEDYSLRNIVVEKELKYYKNLISKIENEIETLVENIKKDEEQLFEKKITKDENKPDEKILEVSDIVKVQVQKVLLMNKIDELKKTQLILKNVELKHNIHVPNSYKQENKQEPYYLIVLKKEIDKLKVFMPKVESLINEEKKNIKTEGQSDNSEPSTEGEITGQATTKPGQQAGSALEGDSVQAQAQEQKQAQPPVPVPVPEAKAQVPTPPAPVNNKTENVSKLDYLEKLYEFLNTSYICHKYILVSHSTMNEKILKQYKITKEEESKLSSCDPLDLLFNIQNNIPVMYSMFDSLNNSLSQLFMEIYEKEMVCNLYKLKDNDKIKNLLEEAKKVSTSVKTLSSSSMQPLSLTPQDKPEVSANDDTSHSTNLNNSLKLFENILSLGKNKNIYQELIGQKSSENFYEKILKDSDTFYNESFTNFVKSKADDINSLNDESKRKKLEEDINKLKKTLQLSFDLYNKYKLKLERLFDKKKTVGKYKMQIKKLTLLKEQLESKLNSLNNPKHVLQNFSVFFNKKKEAEIAETENTLENTKILLKHYKGLVKYYNGESSPLKTLSEESIQTEDNYASLENFKVLSKLEGKLKDNLNLEKKKLSYLSSGLHHLIAELKEVIKNKNYTGNSPSENNTDVNNALESYKKFLPEGTDVATVVSESGSDTLEQSQPKKPASTHVGAESNTITTSQNVDDEVDDVIIVPIFGESEEDYDDLGQVVTGEAVTPSVIDNILSKIENEYEVLYLKPLAGVYRSLKKQLENNVMTFNVNVKDILNSRFNKRENFKNVLESDLIPYKDLTSSNYVVKDPYKFLNKEKRDKFLSSYNYIKDSIDTDINFANDVLGYYKILSEKYKSDLDSIKKYINDKQGENEKYLPFLNNIETLYKTVNDKIDLFVIHLEAKVLNYTYEKSNVEVKIKELNYLKTIQDKLADFKKNNNFVGIADLSTDYNHNNLLTKFLSTGMVFENLAKTVLSNLLDGNLQGMLNISQHQCVKKQCPQNSGCFRHLDEREECKCLLNYKQEGDKCVENPNPTCNENNGGCDADAKCTEEDSGSNGKKITCECTKPDSYPLFDGIFCSSSNFLGISFLLILMLILYSFI.

Positions 1–19 (MKIIFFLCSFLFFIINTQC) are cleaved as a signal peptide. Composition is skewed to polar residues over residues 58-67 (SGTAVTTSTP) and 107-119 (NSRRTNPSDNSSD). Disordered regions lie at residues 58 to 78 (SGTAVTTSTPGSKGSVASGGS) and 94 to 122 (VASGGSVASGGSGNSRRTNPSDNSSDSDA). N-linked (GlcNAc...) asparagine glycans are attached at residues Asn-116 and Asn-268. A disordered region spans residues 689–764 (KKNIKTEGQS…VPTPPAPVNN (76 aa)). 2 stretches are compositionally biased toward polar residues: residues 694 to 704 (TEGQSDNSEPS) and 711 to 722 (GQATTKPGQQAG). Residues 730–741 (VQAQAQEQKQAQ) show a composition bias toward low complexity. Residues Asn-764, Asn-768, Asn-783, and Asn-844 are each glycosylated (N-linked (GlcNAc...) asparagine). Residues 893-915 (SMQPLSLTPQDKPEVSANDDTSH) form a disordered region. N-linked (GlcNAc...) asparagine glycosylation is found at Asn-920, Asn-964, Asn-1058, Asn-1165, and Asn-1174. The tract at residues 1002–1116 (QLSFDLYNKY…EESIQTEDNY (115 aa)) is required for binding to host erythrocyte cell membrane. A compositionally biased stretch (polar residues) spans 1199–1212 (VSESGSDTLEQSQP). Residues 1199-1229 (VSESGSDTLEQSQPKKPASTHVGAESNTITT) form a disordered region. N-linked (GlcNAc...) asparagine glycosylation is found at Asn-1445 and Asn-1526. 2 consecutive EGF-like domains span residues 1530–1570 (HQCV…VENP) and 1571–1618 (NPTC…IFCS). Disulfide bonds link Cys-1532-Cys-1543, Cys-1537-Cys-1553, Cys-1555-Cys-1566, Cys-1574-Cys-1587, Cys-1581-Cys-1601, and Cys-1603-Cys-1617. A lipid anchor (GPI-anchor amidated serine) is attached at Ser-1618. Residues 1619–1639 (SSNFLGISFLLILMLILYSFI) constitute a propeptide, removed in mature form.

Forms a complex composed of subunits p83, p30, p38, and p42 which remain non-covalently associated; the complex is formed at the merozoite surface prior to egress from host erythrocytes. Forms a complex composed of processed MSP1 subunits, MSP6 subunit p36 and MSP7; the complex is formed at the merozoite surface prior to egress from host erythrocytes. Within the complex, interacts (via subunit p38) with MSP6 subunit p36 and (via subunits p83, p30 and p38) with MSP7 (via subunit p22). Forms a complex composed of MSP1, MSP6, DBLMSP1 and DBLMSP2. Within the complex, interacts (via subunit p38) with DBLMSP1 and DBLMSP2. Forms a complex composed of MSP1, and rhoptry proteins RhopH3, RAP1 and CLAG9/RhopH3. Within the complex, interacts (via subunits p42 and p19) with RhopH3 (via C-terminus). Forms a complex composed of MSP1, MSP6, MSP7, MSP9 and MSP3; within the complex, MSP6 and MSP9 mediate the binding to the host erythrocyte. Interacts (via subunits p19 and p42) with MSP9; the interaction is direct; MSP1 subunits p19 or p42, and MSP9 form a co-ligand complex that interacts with host SLC4A1/Band 3 protein. May interact with PFD6. Interacts with host spectrin. As to quaternary structure, interacts with host glycophorin GYPA in a sialic acid-independent manner. In terms of assembly, interacts with host proinflammatory cytokine S100P; the interaction blocks S100P inflammatory and chemotactic activities. Interacts with host SLC4A1/Band 3 (via 5ABC region) on the host erythrocyte surface in a sialic acid-independent manner. The p190 precursor is cleaved by SUB1 prior to merozoite egress into 4 subunits p83, p30, p38, and p42 which remain non-covalently associated. SUB1-mediated proteolytic cleavage occurs in an orderly manner; the first cleavage occurs at the p83/p30 site, followed by cleavage at the p30/p38 site, the last cleavage occurs at the p38/p42 site. The order of cleavage is essential for parasite viability. SUB1-mediated processing is essential for merozoite egress. In a second processing step during erythrocyte invasion, p42 is cleaved by SUB2 into p33 and p19; the latter remains attached to the merozoite surface via its GPI-anchor and stays on the surface during the subsequent ring stage.

It localises to the cell membrane. It is found in the secreted. The protein resides in the vacuole membrane. During the asexual blood stage, involved in merozoite egress from host erythrocytes possibly via its interaction with the host cytoskeleton protein spectrin resulting in the destabilization of the host cytoskeleton and thus leading to erythrocyte cell membrane rupture. Involved in the binding to host erythrocytes and is required for host erythrocyte invasion. Functionally, by binding to host proinflammatory cytokine S100P may interfere with host immune responses. Its function is as follows. Involved in merozoite invasion of host erythrocytes. May play a role in the biogenesis and/or function of the food vacuole during the intraerythrocytic development. This Plasmodium falciparum (isolate Wellcome) protein is Merozoite surface protein 1.